The chain runs to 230 residues: Ribosomal RNA large subunit methyltransferase E (230 aa).

The segment covering 1–13 has biased composition (gly residues); that stretch reads MSGSGGKGGGRGG. A disordered region spans residues 1–22; sequence MSGSGGKGGGRGGLHVRVKTAK. S-adenosyl-L-methionine-binding residues include glycine 81, tryptophan 83, aspartate 100, aspartate 116, and aspartate 140. Lysine 180 serves as the catalytic Proton acceptor.

Belongs to the class I-like SAM-binding methyltransferase superfamily. RNA methyltransferase RlmE family.

Its subcellular location is the cytoplasm. The enzyme catalyses uridine(2552) in 23S rRNA + S-adenosyl-L-methionine = 2'-O-methyluridine(2552) in 23S rRNA + S-adenosyl-L-homocysteine + H(+). Specifically methylates the uridine in position 2552 of 23S rRNA at the 2'-O position of the ribose in the fully assembled 50S ribosomal subunit. The polypeptide is Ribosomal RNA large subunit methyltransferase E (Sphingopyxis alaskensis (strain DSM 13593 / LMG 18877 / RB2256) (Sphingomonas alaskensis)).